The primary structure comprises 200 residues: Imidazoleglycerol-phosphate dehydratase (200 aa).

It belongs to the imidazoleglycerol-phosphate dehydratase family.

Its subcellular location is the cytoplasm. The catalysed reaction is D-erythro-1-(imidazol-4-yl)glycerol 3-phosphate = 3-(imidazol-4-yl)-2-oxopropyl phosphate + H2O. It participates in amino-acid biosynthesis; L-histidine biosynthesis; L-histidine from 5-phospho-alpha-D-ribose 1-diphosphate: step 6/9. The polypeptide is Imidazoleglycerol-phosphate dehydratase (Prosthecochloris aestuarii (strain DSM 271 / SK 413)).